The chain runs to 41 residues: Photosystem II reaction center protein L (41 aa).

The chain crosses the membrane as a helical span at residues serine 20–phenylalanine 40.

Belongs to the PsbL family. PSII is composed of 1 copy each of membrane proteins PsbA, PsbB, PsbC, PsbD, PsbE, PsbF, PsbH, PsbI, PsbJ, PsbK, PsbL, PsbM, PsbT, PsbX, PsbY, PsbZ, Psb30/Ycf12, peripheral proteins PsbO, CyanoQ (PsbQ), PsbU, PsbV and a large number of cofactors. It forms dimeric complexes.

The protein localises to the cellular thylakoid membrane. Functionally, one of the components of the core complex of photosystem II (PSII). PSII is a light-driven water:plastoquinone oxidoreductase that uses light energy to abstract electrons from H(2)O, generating O(2) and a proton gradient subsequently used for ATP formation. It consists of a core antenna complex that captures photons, and an electron transfer chain that converts photonic excitation into a charge separation. This subunit is found at the monomer-monomer interface and is required for correct PSII assembly and/or dimerization. The protein is Photosystem II reaction center protein L of Trichodesmium erythraeum (strain IMS101).